Consider the following 373-residue polypeptide: Spermidine/putrescine import ATP-binding protein PotA (373 aa).

Positions 6–236 (LSLSNLTKQF…PANLFTARFV (231 aa)) constitute an ABC transporter domain. 38–45 (GPSGCGKT) serves as a coordination point for ATP.

It belongs to the ABC transporter superfamily. Spermidine/putrescine importer (TC 3.A.1.11.1) family. As to quaternary structure, the complex is composed of two ATP-binding proteins (PotA), two transmembrane proteins (PotB and PotC) and a solute-binding protein (PotD).

The protein localises to the cell inner membrane. It catalyses the reaction ATP + H2O + polyamine-[polyamine-binding protein]Side 1 = ADP + phosphate + polyamineSide 2 + [polyamine-binding protein]Side 1.. In terms of biological role, part of the ABC transporter complex PotABCD involved in spermidine/putrescine import. Responsible for energy coupling to the transport system. The polypeptide is Spermidine/putrescine import ATP-binding protein PotA (Marinobacter nauticus (strain ATCC 700491 / DSM 11845 / VT8) (Marinobacter aquaeolei)).